Consider the following 528-residue polypeptide: GMP synthase [glutamine-hydrolyzing] (528 aa).

Positions 3-199 (KVAIIDFGSQ…FLDIAGCQKD (197 aa)) constitute a Glutamine amidotransferase type-1 domain. The Nucleophile role is filled by C83. Residues H174 and E176 contribute to the active site. One can recognise a GMPS ATP-PPase domain in the interval 200–394 (WTVTSFIDDQ…LGISTEILMR (195 aa)). 227–233 (SGGVDSS) lines the ATP pocket.

Homodimer.

It carries out the reaction XMP + L-glutamine + ATP + H2O = GMP + L-glutamate + AMP + diphosphate + 2 H(+). It participates in purine metabolism; GMP biosynthesis; GMP from XMP (L-Gln route): step 1/1. Functionally, catalyzes the synthesis of GMP from XMP. This is GMP synthase [glutamine-hydrolyzing] from Ehrlichia ruminantium (strain Welgevonden).